The chain runs to 238 residues: Ribonuclease PH (238 aa).

Residues R86 and 124–126 contribute to the phosphate site; that span reads GTR.

Belongs to the RNase PH family. As to quaternary structure, homohexameric ring arranged as a trimer of dimers.

It carries out the reaction tRNA(n+1) + phosphate = tRNA(n) + a ribonucleoside 5'-diphosphate. Phosphorolytic 3'-5' exoribonuclease that plays an important role in tRNA 3'-end maturation. Removes nucleotide residues following the 3'-CCA terminus of tRNAs; can also add nucleotides to the ends of RNA molecules by using nucleoside diphosphates as substrates, but this may not be physiologically important. Probably plays a role in initiation of 16S rRNA degradation (leading to ribosome degradation) during starvation. In Brucella abortus (strain S19), this protein is Ribonuclease PH.